A 441-amino-acid chain; its full sequence is Glutamyl-tRNA reductase (441 aa).

Substrate is bound by residues 49-52 (TCNR), S109, 114-116 (EGQ), and Q120. Catalysis depends on C50, which acts as the Nucleophile. Residue 198 to 203 (GAGRMS) coordinates NADP(+).

The protein belongs to the glutamyl-tRNA reductase family. As to quaternary structure, homodimer.

The catalysed reaction is (S)-4-amino-5-oxopentanoate + tRNA(Glu) + NADP(+) = L-glutamyl-tRNA(Glu) + NADPH + H(+). It functions in the pathway porphyrin-containing compound metabolism; protoporphyrin-IX biosynthesis; 5-aminolevulinate from L-glutamyl-tRNA(Glu): step 1/2. It participates in porphyrin-containing compound metabolism; chlorophyll biosynthesis. Its function is as follows. Catalyzes the NADPH-dependent reduction of glutamyl-tRNA(Glu) to glutamate 1-semialdehyde (GSA). This Prochlorococcus marinus (strain NATL2A) protein is Glutamyl-tRNA reductase.